A 2968-amino-acid chain; its full sequence is Polyketide synthase 37 (2968 aa).

Residues Lys-32–Ser-454 enclose the Ketosynthase family 3 (KS3) domain. Residues Cys-198, His-338, and His-378 each act as for beta-ketoacyl synthase activity in the active site. Residues Phe-624–Ser-950 are malonyl-CoA:ACP transacylase (MAT) domain. The active-site For malonyltransferase activity is Ser-718. Positions Pro-1017–Leu-1157 are N-terminal hotdog fold. The region spanning Pro-1017–Ser-1350 is the PKS/mFAS DH domain. The segment at Thr-1031 to Asn-1345 is dehydratase (DH) domain. Catalysis depends on His-1049, which acts as the Proton acceptor; for dehydratase activity. Positions Phe-1183–Ser-1350 are C-terminal hotdog fold. The Proton donor; for dehydratase activity role is filled by Asp-1257. The segment at Ser-1522–Gly-1547 is disordered. A compositionally biased stretch (low complexity) spans Thr-1530 to Gly-1547. The segment at Gly-1718–Ile-2053 is enoyl reductase (ER) domain. The segment at Thr-2083–Ser-2277 is ketoreductase (KR) domain. Residues Gly-2379–Gly-2400 are disordered. Positions Phe-2421–Leu-2498 constitute a Carrier domain. Ser-2458 bears the O-(pantetheine 4'-phosphoryl)serine mark. The segment at Ser-2568–Arg-2589 is disordered. The segment at Ile-2707 to Lys-2968 is chalcone synthase. Cys-2747 is a catalytic residue.

It depends on pantetheine 4'-phosphate as a cofactor.

The enzyme catalyses (E)-4-coumaroyl-CoA + 3 malonyl-CoA + 3 H(+) = 2',4,4',6'-tetrahydroxychalcone + 3 CO2 + 4 CoA. It catalyses the reaction hexanoyl-CoA + 3 malonyl-CoA + 3 H(+) = 2,4,6-trihydroxyphenylhexan-1-one + 3 CO2 + 4 CoA. Its pathway is secondary metabolite biosynthesis; flavonoid biosynthesis. In terms of biological role, polyketide synthase; part of the gene cluster that mediates the biosynthesis of DIF-1 (Differentiation Inducing Factor-1), a signal molecule involved in the differentiation of pstO (prestalk-O) cells. The three-step process begins with the formation of (2,4,6-trihydroxyphenyl)-1-hexan-1-one (THPH) by the polyketide synthase StlB. THPH is then dichlorinated by the flavin-dependent halogenase ChlA. The last step of DIF-1 biosynthesis is the O-methylation of dichloro-THPH (or des-methyl-DIF-1) by the methyltransferase DmtA to yield DIF-1. This is Polyketide synthase 37 (StlB) from Dictyostelium discoideum (Social amoeba).